Here is a 365-residue protein sequence, read N- to C-terminus: Mannonate dehydratase 1 (365 aa).

The protein belongs to the mannonate dehydratase family. It depends on Fe(2+) as a cofactor. Requires Mn(2+) as cofactor.

The enzyme catalyses D-mannonate = 2-dehydro-3-deoxy-D-gluconate + H2O. It participates in carbohydrate metabolism; pentose and glucuronate interconversion. Functionally, catalyzes the dehydration of D-mannonate. This is Mannonate dehydratase 1 from Bacillus licheniformis (strain ATCC 14580 / DSM 13 / JCM 2505 / CCUG 7422 / NBRC 12200 / NCIMB 9375 / NCTC 10341 / NRRL NRS-1264 / Gibson 46).